Here is a 221-residue protein sequence, read N- to C-terminus: Mediator of RNA polymerase II transcription subunit 19a (221 aa).

The segment at 101 to 221 (PVELPPAEKG…DEVGAIRVAG (121 aa)) is disordered. Residues 142–152 (EHKKHKHKHKD) show a composition bias toward basic residues. Residues 153 to 178 (RSKDKDKDKDRDRKKDKNGHHDSGDH) show a composition bias toward basic and acidic residues. Positions 179 to 188 (SKKHHDKKRK) are enriched in basic residues.

Belongs to the plant Mediator complex subunit 19 family. Component of the Mediator complex. Interacts with FIB2.

It is found in the nucleus. In terms of biological role, component of the Mediator complex, a coactivator involved in the regulated transcription of nearly all RNA polymerase II-dependent genes. Mediator functions as a bridge to convey information from gene-specific regulatory proteins to the basal RNA polymerase II transcription machinery. The Mediator complex, having a compact conformation in its free form, is recruited to promoters by direct interactions with regulatory proteins and serves for the assembly of a functional preinitiation complex with RNA polymerase II and the general transcription factors. This Arabidopsis thaliana (Mouse-ear cress) protein is Mediator of RNA polymerase II transcription subunit 19a (MED19A).